Here is a 320-residue protein sequence, read N- to C-terminus: Cytochrome f (320 aa).

Positions 1–35 (MQTRNTFFWIKEQMTRSISVSIIVYVITQTSISNA) are cleaved as a signal peptide. Tyr-36, Cys-56, Cys-59, and His-60 together coordinate heme. The chain crosses the membrane as a helical span at residues 286–306 (VQGLLFFFASVILAQIFLVLK).

Belongs to the cytochrome f family. In terms of assembly, the 4 large subunits of the cytochrome b6-f complex are cytochrome b6, subunit IV (17 kDa polypeptide, petD), cytochrome f and the Rieske protein, while the 4 small subunits are PetG, PetL, PetM and PetN. The complex functions as a dimer. Heme is required as a cofactor.

Its subcellular location is the plastid. The protein resides in the chloroplast thylakoid membrane. In terms of biological role, component of the cytochrome b6-f complex, which mediates electron transfer between photosystem II (PSII) and photosystem I (PSI), cyclic electron flow around PSI, and state transitions. This is Cytochrome f from Buxus microphylla (Littleleaf boxwood).